Consider the following 167-residue polypeptide: Fluoride-specific ion channel FluC (167 aa).

Transmembrane regions (helical) follow at residues 32-52, 69-89, 102-122, and 137-157; these read HVTPIYTIAAISLGASLGALA, IGTLAANLIAAYVVGVTIAYV, FMITGLAGGLSTFSTFTAELF, and LGLHVGGSLALLMLGMLTIGL. Residues glycine 109 and serine 112 each contribute to the Na(+) site.

This sequence belongs to the fluoride channel Fluc/FEX (TC 1.A.43) family.

Its subcellular location is the cell inner membrane. The enzyme catalyses fluoride(in) = fluoride(out). With respect to regulation, na(+) is not transported, but it plays an essential structural role and its presence is essential for fluoride channel function. Its function is as follows. Fluoride-specific ion channel. Important for reducing fluoride concentration in the cell, thus reducing its toxicity. The chain is Fluoride-specific ion channel FluC from Xanthomonas oryzae pv. oryzae (strain KACC10331 / KXO85).